The chain runs to 370 residues: NADH-quinone oxidoreductase subunit D 2 (370 aa).

Belongs to the complex I 49 kDa subunit family. NDH-1 is composed of 14 different subunits. Subunits NuoB, C, D, E, F, and G constitute the peripheral sector of the complex.

It localises to the cell membrane. The enzyme catalyses a quinone + NADH + 5 H(+)(in) = a quinol + NAD(+) + 4 H(+)(out). Functionally, NDH-1 shuttles electrons from NADH, via FMN and iron-sulfur (Fe-S) centers, to quinones in the respiratory chain. The immediate electron acceptor for the enzyme in this species is believed to be ubiquinone. Couples the redox reaction to proton translocation (for every two electrons transferred, four hydrogen ions are translocated across the cytoplasmic membrane), and thus conserves the redox energy in a proton gradient. This is NADH-quinone oxidoreductase subunit D 2 from Herpetosiphon aurantiacus (strain ATCC 23779 / DSM 785 / 114-95).